The following is a 291-amino-acid chain: ATP synthase subunit a (291 aa).

A run of 5 helical transmembrane segments spans residues 47 to 67, 140 to 160, 167 to 187, 207 to 227, and 230 to 250; these read FTNLSLSMLLTLGLVLLLVFV, HFLITLALSFSIFIGITIVGF, FFSFLLPAGVPLPLAPFLVLL, MMAGHSSVKILSGFAWTMLFL, and IFYFLGDLGPLFIVLALTGLE.

This sequence belongs to the ATPase A chain family. In terms of assembly, F-type ATPases have 2 components, CF(1) - the catalytic core - and CF(0) - the membrane proton channel. CF(1) has five subunits: alpha(3), beta(3), gamma(1), delta(1), epsilon(1). CF(0) has three main subunits: a, b and c.

The protein resides in the mitochondrion inner membrane. Mitochondrial membrane ATP synthase (F(1)F(0) ATP synthase or Complex V) produces ATP from ADP in the presence of a proton gradient across the membrane which is generated by electron transport complexes of the respiratory chain. F-type ATPases consist of two structural domains, F(1) - containing the extramembraneous catalytic core and F(0) - containing the membrane proton channel, linked together by a central stalk and a peripheral stalk. During catalysis, ATP synthesis in the catalytic domain of F(1) is coupled via a rotary mechanism of the central stalk subunits to proton translocation. Key component of the proton channel; it may play a direct role in the translocation of protons across the membrane. In Zea mays (Maize), this protein is ATP synthase subunit a (ATP6).